A 454-amino-acid chain; its full sequence is Protein phosphatase 1F (454 aa).

Polar residues predominate over residues 1 to 12 (MSSGAPQKSSPM). A disordered region spans residues 1 to 28 (MSSGAPQKSSPMASGAEETPGFLDTLLQ). Positions 156 to 413 (LVSIHAIRNT…DNITVMVVFL (258 aa)) constitute a PPM-type phosphatase domain. Aspartate 198, glycine 199, aspartate 360, and aspartate 404 together coordinate Mn(2+). Residues 419-454 (LLEGGNQGEGDPQAEGRRQDLPSSLPEPETQAPPRS) form a disordered region. Serine 454 is subject to Phosphoserine.

This sequence belongs to the PP2C family. In terms of assembly, associates with FEM1B. Mg(2+) is required as a cofactor. It depends on Mn(2+) as a cofactor.

The catalysed reaction is O-phospho-L-seryl-[protein] + H2O = L-seryl-[protein] + phosphate. The enzyme catalyses O-phospho-L-threonyl-[protein] + H2O = L-threonyl-[protein] + phosphate. Dephosphorylates and concomitantly deactivates CaM-kinase II activated upon autophosphorylation, and CaM-kinases IV and I activated upon phosphorylation by CaM-kinase kinase. Promotes apoptosis. In Homo sapiens (Human), this protein is Protein phosphatase 1F (PPM1F).